A 262-amino-acid chain; its full sequence is Phosphatidylserine decarboxylase proenzyme (262 aa).

Residues Asp-86, His-142, and Ser-226 each act as charge relay system; for autoendoproteolytic cleavage activity in the active site. Catalysis depends on Ser-226, which acts as the Schiff-base intermediate with substrate; via pyruvic acid; for decarboxylase activity. Ser-226 is modified (pyruvic acid (Ser); by autocatalysis).

Belongs to the phosphatidylserine decarboxylase family. PSD-B subfamily. Prokaryotic type I sub-subfamily. In terms of assembly, heterodimer of a large membrane-associated beta subunit and a small pyruvoyl-containing alpha subunit. The cofactor is pyruvate. In terms of processing, is synthesized initially as an inactive proenzyme. Formation of the active enzyme involves a self-maturation process in which the active site pyruvoyl group is generated from an internal serine residue via an autocatalytic post-translational modification. Two non-identical subunits are generated from the proenzyme in this reaction, and the pyruvate is formed at the N-terminus of the alpha chain, which is derived from the carboxyl end of the proenzyme. The autoendoproteolytic cleavage occurs by a canonical serine protease mechanism, in which the side chain hydroxyl group of the serine supplies its oxygen atom to form the C-terminus of the beta chain, while the remainder of the serine residue undergoes an oxidative deamination to produce ammonia and the pyruvoyl prosthetic group on the alpha chain. During this reaction, the Ser that is part of the protease active site of the proenzyme becomes the pyruvoyl prosthetic group, which constitutes an essential element of the active site of the mature decarboxylase.

The protein localises to the cell membrane. The catalysed reaction is a 1,2-diacyl-sn-glycero-3-phospho-L-serine + H(+) = a 1,2-diacyl-sn-glycero-3-phosphoethanolamine + CO2. Its pathway is phospholipid metabolism; phosphatidylethanolamine biosynthesis; phosphatidylethanolamine from CDP-diacylglycerol: step 2/2. In terms of biological role, catalyzes the formation of phosphatidylethanolamine (PtdEtn) from phosphatidylserine (PtdSer). This Bacillus thuringiensis subsp. konkukian (strain 97-27) protein is Phosphatidylserine decarboxylase proenzyme.